The sequence spans 274 residues: Trehalose transport system permease protein SugB (274 aa).

6 consecutive transmembrane segments (helical) span residues 8–28, 70–90, 102–122, 137–157, 182–202, and 239–259; these read YWAV…LWIF, IGIG…AAYA, LIGA…TPLF, LILP…SAFF, VIVP…FIFA, and GSIA…VLIF. The 194-residue stretch at 66 to 259 folds into the ABC transmembrane type-1 domain; that stretch reads LINSIGIGLI…IPIIVFVLIF (194 aa).

The protein belongs to the binding-protein-dependent transport system permease family. The complex is composed of two ATP-binding proteins (SugC), two transmembrane proteins (Suga and SugB) and a solute-binding protein (LpqY).

Its subcellular location is the cell inner membrane. Its function is as follows. Part of the ABC transporter complex LpqY-SugA-SugB-SugC, which is highly specific for uptake of trehalose. Involved in the recycling of extracellular trehalose released from trehalose-containing molecules synthesized by M.tuberculosis. Trehalose uptake is essential for virulence. Probably responsible for the translocation of the substrate across the membrane. The sequence is that of Trehalose transport system permease protein SugB (sugB) from Mycobacterium tuberculosis (strain CDC 1551 / Oshkosh).